The sequence spans 347 residues: Melatonin receptor type 1B-B (347 aa).

At 1–36 (MPENIAFLTNSTDLGHVGRALGSSARPAWAIAVLAS) the chain is on the extracellular side. N10 carries N-linked (GlcNAc...) asparagine glycosylation. A helical transmembrane segment spans residues 37–57 (VLIFTTVVDVLGNLLVIISVF). Residues 58–72 (RNRKLRNAGNVFVVS) are Cytoplasmic-facing. Residues 73–93 (LAFADLVVAFYPYPLVLYAIF) form a helical membrane-spanning segment. Over 94-105 (HDGWSLGETQCK) the chain is Extracellular. An intrachain disulfide couples C104 to C181. A helical membrane pass occupies residues 106 to 126 (ISGFLMGLSVIGSVFNITGIA). Topologically, residues 127-148 (INRYCYICHSFAYGRLYSFRNT) are cytoplasmic. The helical transmembrane segment at 149–169 (LLLVALIWALTVLAILPNFFV) threads the bilayer. The Extracellular portion of the chain corresponds to 170–191 (GSLSYDPRVYSCTFTQTASSSY). Residues 192-212 (TVVVVVVHFLVPIAVVTFCYL) form a helical membrane-spanning segment. Over 213–244 (RIWVLVIQVRRKVKSEERSRVRPSDLRNFVTM) the chain is Cytoplasmic. A helical membrane pass occupies residues 245–265 (FVVFVLFAICWAPLNLIGLVV). Residues 266 to 278 (AINPEVMAPRVPE) are Extracellular-facing. The helical transmembrane segment at 279–299 (WLFVVSYFMAYFNSCLNAIIY) threads the bilayer. The Cytoplasmic portion of the chain corresponds to 300–347 (GLLNRNFRKEYVRIMTAVWIPRRFVTETSRAATDGMRSKPSPAINNNE).

Belongs to the G-protein coupled receptor 1 family.

It is found in the cell membrane. Its function is as follows. High affinity receptor for melatonin. The activity of this receptor is mediated by pertussis toxin sensitive G proteins that inhibits adenylate cyclase activity. In Danio rerio (Zebrafish), this protein is Melatonin receptor type 1B-B (mtnr1bb).